The primary structure comprises 103 residues: Sec-independent protein translocase protein TatA (103 aa).

A helical membrane pass occupies residues M1 to F21. A disordered region spans residues K77–K103. Over residues R90–K103 the composition is skewed to basic residues.

Belongs to the TatA/E family. As to quaternary structure, the Tat system comprises two distinct complexes: a TatABC complex, containing multiple copies of TatA, TatB and TatC subunits, and a separate TatA complex, containing only TatA subunits. Substrates initially bind to the TatABC complex, which probably triggers association of the separate TatA complex to form the active translocon.

It localises to the cell inner membrane. Part of the twin-arginine translocation (Tat) system that transports large folded proteins containing a characteristic twin-arginine motif in their signal peptide across membranes. TatA could form the protein-conducting channel of the Tat system. This Bartonella henselae (strain ATCC 49882 / DSM 28221 / CCUG 30454 / Houston 1) (Rochalimaea henselae) protein is Sec-independent protein translocase protein TatA.